Consider the following 786-residue polypeptide: Ribosome biogenesis protein BOP1 homolog (786 aa).

Residues 1–11 (MTKKLTIKRKV) are compositionally biased toward basic residues. Positions 1-161 (MTKKLTIKRK…DSDTSDEEDI (161 aa)) are disordered. Acidic residues-rich tracts occupy residues 28-37 (DNEEEEEEDL), 46-55 (EDSTDDEGID), 62-74 (SSEDLEFESDEEG), and 86-103 (SGDDDEESAEDEEEEDDA). The segment covering 104–113 (DAKKSSKNND) has biased composition (basic and acidic residues). The span at 151 to 160 (ADSDTSDEED) shows a compositional bias: acidic residues. 7 WD repeats span residues 447 to 488 (GHTD…RTIE), 490 to 528 (EDVVRCVAWCPNAKLSIIAVATGSRLLLVNPKVGDKLLV), 572 to 614 (THFK…SQIP), 617 to 655 (KSKGLIQCVLFHPVKPCFFVATQHNIRIYDLVKQELIKK), 658 to 697 (TNSKWISGMSIHPKGDNLLVSTYDKKMLWFDLDLSTKPYQ), 701 to 740 (LHRNAVRSVAFHLRYPLFASGSDDQAVIVSHGMVYNDLLQ), and 756 to 786 (REEFGVLDVNWHPVQPWVFSTGADCTIRLFT).

This sequence belongs to the WD repeat BOP1/ERB1 family.

It is found in the nucleus. Its subcellular location is the nucleolus. It localises to the nucleoplasm. Functionally, required for maturation of ribosomal RNAs and formation of the large ribosomal subunit. The protein is Ribosome biogenesis protein BOP1 homolog of Drosophila pseudoobscura pseudoobscura (Fruit fly).